Reading from the N-terminus, the 103-residue chain is Large ribosomal subunit protein bL21 (103 aa).

Belongs to the bacterial ribosomal protein bL21 family. In terms of assembly, part of the 50S ribosomal subunit. Contacts protein L20.

Its function is as follows. This protein binds to 23S rRNA in the presence of protein L20. This Cupriavidus necator (strain ATCC 17699 / DSM 428 / KCTC 22496 / NCIMB 10442 / H16 / Stanier 337) (Ralstonia eutropha) protein is Large ribosomal subunit protein bL21.